A 433-amino-acid chain; its full sequence is Adenylosuccinate synthetase (433 aa).

GTP is bound by residues Gly11–Lys17 and Gly39–Thr41. The active-site Proton acceptor is the Asp12. The Mg(2+) site is built by Asp12 and Gly39. Residues Asp12–Lys15, Asn37–His40, Thr134, Arg148, Asn230, Thr245, and Arg309 each bind IMP. Residue His40 is the Proton donor of the active site. Val305 to Arg311 serves as a coordination point for substrate. Residues Arg311, Lys337–Asp339, and Gly419–Gly421 contribute to the GTP site.

Belongs to the adenylosuccinate synthetase family. In terms of assembly, homodimer. It depends on Mg(2+) as a cofactor.

It localises to the cytoplasm. The enzyme catalyses IMP + L-aspartate + GTP = N(6)-(1,2-dicarboxyethyl)-AMP + GDP + phosphate + 2 H(+). Its pathway is purine metabolism; AMP biosynthesis via de novo pathway; AMP from IMP: step 1/2. Functionally, plays an important role in the de novo pathway and in the salvage pathway of purine nucleotide biosynthesis. Catalyzes the first committed step in the biosynthesis of AMP from IMP. The sequence is that of Adenylosuccinate synthetase from Saccharomyces cerevisiae (strain AWRI1631) (Baker's yeast).